Here is a 60-residue protein sequence, read N- to C-terminus: uncharacterized protein (60 aa).

The chain crosses the membrane as a helical span at residues 11 to 33; the sequence is VFTVGFITGGVTPVMVSFVWPAA. N-linked (GlcNAc...) asparagine; by host glycans are attached at residues asparagine 40 and asparagine 57.

The protein localises to the host membrane. This is an uncharacterized protein from African swine fever virus (strain Badajoz 1971 Vero-adapted) (Ba71V).